A 322-amino-acid polypeptide reads, in one-letter code: Interferon regulatory factor 1 (322 aa).

The segment at residues R5–P113 is a DNA-binding region (IRF tryptophan pentad repeat). An N6-acetyllysine modification is found at K78. Residues E92–Y164 form a disordered region. Over residues D146 to L157 the composition is skewed to polar residues. Glycyl lysine isopeptide (Lys-Gly) (interchain with G-Cter in SUMO) cross-links involve residues K276 and K296.

The protein belongs to the IRF family. Monomer. Homodimer. Interacts with EP300. Interacts with MYD88. Interacts with PIAS3. Interacts with SPOP. In terms of processing, phosphorylated by CK2 and this positively regulates its activity. Sumoylation represses the transcriptional activity and displays enhanced resistance to protein degradation. Sumoylated by UBE2I/UBC9 and SUMO1. Inactivates the tumor suppressor activity. Elevated levels in tumor cells. Major site is Lys-276. Sumoylation is enhanced by PIAS3. Desumoylated by SENP1 in tumor cells and appears to compete with ubiquitination on C-terminal sites. Post-translationally, ubiquitinated in a SPOP-depedent manner. Appears to compete with sumoylation on C-terminal sites.

It localises to the nucleus. It is found in the cytoplasm. With respect to regulation, activated by MYD88. Functionally, transcriptional regulator which displays a remarkable functional diversity in the regulation of cellular responses. Regulates transcription of IFN and IFN-inducible genes, host response to viral and bacterial infections, regulation of many genes expressed during hematopoiesis, inflammation, immune responses and cell proliferation and differentiation, regulation of the cell cycle and induction of growth arrest and programmed cell death following DNA damage. Stimulates both innate and acquired immune responses through the activation of specific target genes and can act as a transcriptional activator and repressor regulating target genes by binding to an interferon-stimulated response element (ISRE) in their promoters. Has an essentail role in IFNG-dependent immunity to mycobacteria. Binds to a consensus sequence in gene promoters. Its target genes for transcriptional activation activity include: genes involved in anti-viral response, such as IFN-alpha/beta, RIGI, TNFSF10/TRAIL, ZBP1, OAS1/2, PIAS1/GBP, EIF2AK2/PKR and RSAD2/viperin; antibacterial response, such as GBP2, GBP5 and NOS2/INOS; anti-proliferative response, such as p53/TP53, LOX and CDKN1A; apoptosis, such as BBC3/PUMA, CASP1, CASP7 and CASP8; immune response, such as IL7, IL12A/B and IL15, PTGS2/COX2 and CYBB; DNA damage responses and DNA repair, such as POLQ/POLH; MHC class I expression, such as TAP1, PSMB9/LMP2, PSME1/PA28A, PSME2/PA28B and B2M and MHC class II expression, such as CIITA; metabolic enzymes, such as ACOD1/IRG1. Represses genes involved in anti-proliferative response, such as BIRC5/survivin, CCNB1, CCNE1, CDK1, CDK2 and CDK4 and in immune response, such as FOXP3, IL4, ANXA2 and TLR4. Stimulates p53/TP53-dependent transcription through enhanced recruitment of EP300 leading to increased acetylation of p53/TP53. Plays an important role in immune response directly affecting NK maturation and activity, macrophage production of IL12, Th1 development and maturation of CD8+ T-cells. Also implicated in the differentiation and maturation of dendritic cells and in the suppression of regulatory T (Treg) cells development. Acts as a tumor suppressor and plays a role not only in antagonism of tumor cell growth but also in stimulating an immune response against tumor cells. The sequence is that of Interferon regulatory factor 1 (IRF1) from Bos taurus (Bovine).